Here is a 504-residue protein sequence, read N- to C-terminus: Aspartyl/glutamyl-tRNA(Asn/Gln) amidotransferase subunit B (504 aa).

It belongs to the GatB/GatE family. GatB subfamily. In terms of assembly, heterotrimer of A, B and C subunits.

The catalysed reaction is L-glutamyl-tRNA(Gln) + L-glutamine + ATP + H2O = L-glutaminyl-tRNA(Gln) + L-glutamate + ADP + phosphate + H(+). It catalyses the reaction L-aspartyl-tRNA(Asn) + L-glutamine + ATP + H2O = L-asparaginyl-tRNA(Asn) + L-glutamate + ADP + phosphate + 2 H(+). Allows the formation of correctly charged Asn-tRNA(Asn) or Gln-tRNA(Gln) through the transamidation of misacylated Asp-tRNA(Asn) or Glu-tRNA(Gln) in organisms which lack either or both of asparaginyl-tRNA or glutaminyl-tRNA synthetases. The reaction takes place in the presence of glutamine and ATP through an activated phospho-Asp-tRNA(Asn) or phospho-Glu-tRNA(Gln). In Rhodococcus opacus (strain B4), this protein is Aspartyl/glutamyl-tRNA(Asn/Gln) amidotransferase subunit B.